Reading from the N-terminus, the 95-residue chain is Large ribosomal subunit protein uL23 (95 aa).

It belongs to the universal ribosomal protein uL23 family. In terms of assembly, part of the 50S ribosomal subunit. Contacts protein L29, and trigger factor when it is bound to the ribosome.

Functionally, one of the early assembly proteins it binds 23S rRNA. One of the proteins that surrounds the polypeptide exit tunnel on the outside of the ribosome. Forms the main docking site for trigger factor binding to the ribosome. In Bacillus licheniformis (strain ATCC 14580 / DSM 13 / JCM 2505 / CCUG 7422 / NBRC 12200 / NCIMB 9375 / NCTC 10341 / NRRL NRS-1264 / Gibson 46), this protein is Large ribosomal subunit protein uL23.